The chain runs to 845 residues: Disintegrin and metalloproteinase domain-containing protein 9 (845 aa).

Residues 1–29 form the signal peptide; it reads MGPRALSPLASLRLRWLLACGLLGPVLEA. Topologically, residues 30–697 are extracellular; the sequence is GRPDLEQTVH…YNAKSTALRD (668 aa). Residues Asn-144, Asn-154, and Asn-231 are each glycosylated (N-linked (GlcNAc...) asparagine). In terms of domain architecture, Peptidase M12B spans 212 to 406; it reads RYVELFIVVD…KGGSCLLNIP (195 aa). Cystine bridges form between Cys-322/Cys-401, Cys-363/Cys-385, Cys-365/Cys-370, and Cys-473/Cys-493. His-347 serves as a coordination point for Zn(2+). Glu-348 is a catalytic residue. Positions 351 and 357 each coordinate Zn(2+). Residues Asn-381, Asn-487, and Asn-636 are each glycosylated (N-linked (GlcNAc...) asparagine). The Disintegrin domain maps to 414 to 501; sequence APSCGNKLVD…FCPPDVFIQN (88 aa). Intrachain disulfides connect Cys-644/Cys-656, Cys-650/Cys-662, and Cys-664/Cys-673. An EGF-like domain is found at 644 to 698; sequence CDIQGKCHGHGVCNSNKNCHCEDGWAPPHCDTKGYGGSVDSGPTYNAKSTALRDG. A helical membrane pass occupies residues 698–718; it reads GLLVFFFLIVPLVAAAIFLFI. Over 719–845 the chain is Cytoplasmic; that stretch reads KRDELRKTFR…PAPPLYSSLT (127 aa). A disordered region spans residues 729-845; that stretch reads KKRSQMSDGR…PAPPLYSSLT (117 aa). The segment covering 734-745 has biased composition (polar residues); the sequence is MSDGRNQANVSR. Positions 783–794 are enriched in pro residues; sequence PGGPGVSRPPPG.

In terms of assembly, interacts with SH3GL2 and SNX9 through its cytoplasmic tail. Interacts with ITGA6. Requires Zn(2+) as cofactor. Proteolytically cleaved in the trans-Golgi network before it reaches the plasma membrane to generate a mature protein. The removal of the pro-domain occurs via cleavage at two different sites. Processed most likely by a pro-protein convertase such as furin, at the boundary between the pro-domain and the catalytic domain. An additional upstream cleavage pro-protein convertase site (Arg-56/Glu-57) has an important role in the activation of ADAM9. In terms of processing, phosphorylation is induced in vitro by phorbol-12-myristate-13-acetate (PMA).

The protein localises to the cell membrane. With respect to regulation, synthesized as an inactive form which is proteolytically cleaved to generate an active enzyme. Processing at the upstream site is particularly important for activation of the proenzyme, whereas processing at the boundary between the pro-domain and the catalytic domain does not appear to be essential. Inhibited by hydroxamic acid-based inhibitors. Metalloprotease that cleaves and releases a number of molecules with important roles in tumorigenesis and angiogenesis, such as TEK, KDR, EPHB4, CD40, VCAM1 and CDH5. May mediate cell-cell, cell-matrix interactions and regulate the motility of cells via interactions with integrins. The chain is Disintegrin and metalloproteinase domain-containing protein 9 from Mus musculus (Mouse).